Here is a 337-residue protein sequence, read N- to C-terminus: tRNA N6-adenosine threonylcarbamoyltransferase (337 aa).

Fe cation-binding residues include His-111 and His-115. Residues 134-138 (LVSGG), Asp-167, Gly-180, and Asn-272 each bind substrate. Asp-300 is a Fe cation binding site.

This sequence belongs to the KAE1 / TsaD family. Requires Fe(2+) as cofactor.

The protein localises to the cytoplasm. The catalysed reaction is L-threonylcarbamoyladenylate + adenosine(37) in tRNA = N(6)-L-threonylcarbamoyladenosine(37) in tRNA + AMP + H(+). Required for the formation of a threonylcarbamoyl group on adenosine at position 37 (t(6)A37) in tRNAs that read codons beginning with adenine. Is involved in the transfer of the threonylcarbamoyl moiety of threonylcarbamoyl-AMP (TC-AMP) to the N6 group of A37, together with TsaE and TsaB. TsaD likely plays a direct catalytic role in this reaction. This Photorhabdus laumondii subsp. laumondii (strain DSM 15139 / CIP 105565 / TT01) (Photorhabdus luminescens subsp. laumondii) protein is tRNA N6-adenosine threonylcarbamoyltransferase.